The following is a 201-amino-acid chain: Phospholipase A2 inhibitor NAI (201 aa).

The first 19 residues, 1 to 19 (MKSLQIICLLFVLVARGSC), serve as a signal peptide directing secretion. 8 disulfides stabilise this stretch: Cys22–Cys47, Cys25–Cys32, Cys40–Cys68, Cys74–Cys95, Cys96–Cys101, Cys119–Cys144, Cys137–Cys166, and Cys170–Cys191. N-linked (GlcNAc...) asparagine glycosylation is present at Asn176.

Belongs to the CNF-like-inhibitor family. In terms of assembly, heterotrimer of 2 subunits A and 1 subunit B; non-covalently linked. Post-translationally, N-glycosylated, probably by biantennary structure. Glycosylation does not change PLA2 inhibitory activity. In terms of tissue distribution, expressed by the liver.

It is found in the secreted. Inhibits the enzymatic activity of all phospholipase A2 tested, binding them with micromole to nanomole affinity. The polypeptide is Phospholipase A2 inhibitor NAI (Notechis ater (Black tiger snake)).